The primary structure comprises 194 residues: MHILTAGVDEAGRGPLVGSVFAAAVILPETFDLPGLTDSKKLSEKKRDALAEMIKNQAVEWHVAAASPEEIASLNILHATMLAMKRAVDGLAVRPEKIFIDGNRIPEHLNIPAEAVVKGDSKIIEISAASVLAKTARDAEMYALAQRHPQYGFDKHKGYGTKQHLEALEKYGVLPEHRRDFAPVRNLLAQQALF.

The RNase H type-2 domain maps to 3 to 193 (ILTAGVDEAG…VRNLLAQQAL (191 aa)). The a divalent metal cation site is built by Asp-9, Glu-10, and Asp-101.

It belongs to the RNase HII family. Mn(2+) is required as a cofactor. It depends on Mg(2+) as a cofactor.

The protein localises to the cytoplasm. The catalysed reaction is Endonucleolytic cleavage to 5'-phosphomonoester.. Endonuclease that specifically degrades the RNA of RNA-DNA hybrids. The sequence is that of Ribonuclease HII (rnhB) from Neisseria meningitidis serogroup B (strain ATCC BAA-335 / MC58).